Consider the following 116-residue polypeptide: Large-conductance mechanosensitive channel (116 aa).

The next 2 helical transmembrane spans lie at 7–27 (EFAL…GAAF) and 64–84 (GLFI…FIFV).

The protein belongs to the MscL family. As to quaternary structure, homopentamer.

It localises to the cell membrane. Its function is as follows. Channel that opens in response to stretch forces in the membrane lipid bilayer. May participate in the regulation of osmotic pressure changes within the cell. The sequence is that of Large-conductance mechanosensitive channel from Staphylococcus epidermidis (strain ATCC 35984 / DSM 28319 / BCRC 17069 / CCUG 31568 / BM 3577 / RP62A).